The sequence spans 62 residues: MFTLKKSLLLLFFLGTINLSLCEEERDADEEERRDDPEERAVQVEKRILPILAPLIGGLLGK.

Positions 1–22 (MFTLKKSLLLLFFLGTINLSLC) are cleaved as a signal peptide. A propeptide spanning residues 23–45 (EEERDADEEERRDDPEERAVQVE) is cleaved from the precursor. Leu-60 bears the Leucine amide mark.

This sequence belongs to the frog skin active peptide (FSAP) family. Temporin subfamily. As to expression, expressed by the skin glands.

The protein localises to the secreted. Antimicrobial peptide. Has low activity against the Gram-positive bacterium S.aureus (MIC&gt;100 uM) and the Gram-negative bacterium E.coli (MIC&gt;100 uM). Has weak hemolytic activity against human erythrocytes. This is Temporin-CDYb from Rana dybowskii (Dybovsky's frog).